Here is a 335-residue protein sequence, read N- to C-terminus: Mycobacterial beta-ketoacyl-[acyl-carrier-protein] synthase III (335 aa).

Active-site residues include cysteine 122 and histidine 258. The interval 259–263 (QANSR) is ACP-binding. Residue asparagine 289 is part of the active site.

It belongs to the thiolase-like superfamily. FabH family. Homodimer.

The protein localises to the cytoplasm. It carries out the reaction malonyl-[ACP] + dodecanoyl-CoA + H(+) = 3-oxotetradecanoyl-[ACP] + CO2 + CoA. It functions in the pathway lipid metabolism; fatty acid biosynthesis. The protein operates within lipid metabolism; mycolic acid biosynthesis. Functionally, catalyzes the condensation reaction of fatty acid synthesis by the addition to an acyl acceptor of two carbons from malonyl-ACP. Catalyzes the first condensation reaction which initiates fatty acid synthesis and may therefore play a role in governing the total rate of fatty acid production. Possesses both acetoacetyl-ACP synthase and acetyl transacylase activities. Its substrate specificity determines the biosynthesis of branched-chain and/or straight-chain of fatty acids. This is Mycobacterial beta-ketoacyl-[acyl-carrier-protein] synthase III from Mycobacterium bovis (strain ATCC BAA-935 / AF2122/97).